The chain runs to 282 residues: Acetylglutamate kinase (282 aa).

Substrate-binding positions include 62–63 (GG), Arg-84, and Asn-178. L-arginine-binding positions include Lys-196, Ser-214, and 266–269 (EIFS).

In terms of assembly, homohexamer.

The protein localises to the cytoplasm. It carries out the reaction N-acetyl-L-glutamate + ATP = N-acetyl-L-glutamyl 5-phosphate + ADP. The protein operates within amino-acid biosynthesis; L-arginine biosynthesis; N(2)-acetyl-L-ornithine from L-glutamate: step 2/4. With respect to regulation, allosterically inhibited by arginine. In terms of biological role, catalyzes the ATP-dependent phosphorylation of N-acetyl-L-glutamate. This chain is Acetylglutamate kinase, found in Thermotoga maritima (strain ATCC 43589 / DSM 3109 / JCM 10099 / NBRC 100826 / MSB8).